The sequence spans 284 residues: Acetyl-coenzyme A carboxylase carboxyl transferase subunit beta (284 aa).

A CoA carboxyltransferase N-terminal domain is found at 24-284 (GLWYKSPTGK…LDLILNNEVR (261 aa)).

This sequence belongs to the AccD/PCCB family. As to quaternary structure, acetyl-CoA carboxylase is a heterohexamer composed of biotin carboxyl carrier protein (AccB), biotin carboxylase (AccC) and two subunits each of ACCase subunit alpha (AccA) and ACCase subunit beta (AccD).

It is found in the cytoplasm. The enzyme catalyses N(6)-carboxybiotinyl-L-lysyl-[protein] + acetyl-CoA = N(6)-biotinyl-L-lysyl-[protein] + malonyl-CoA. It participates in lipid metabolism; malonyl-CoA biosynthesis; malonyl-CoA from acetyl-CoA: step 1/1. In terms of biological role, component of the acetyl coenzyme A carboxylase (ACC) complex. Biotin carboxylase (BC) catalyzes the carboxylation of biotin on its carrier protein (BCCP) and then the CO(2) group is transferred by the transcarboxylase to acetyl-CoA to form malonyl-CoA. This is Acetyl-coenzyme A carboxylase carboxyl transferase subunit beta from Flavobacterium psychrophilum (strain ATCC 49511 / DSM 21280 / CIP 103535 / JIP02/86).